We begin with the raw amino-acid sequence, 184 residues long: Thylakoid membrane protein slr0575 (184 aa).

Helical transmembrane passes span 5-25 and 31-51; these read ISLA…GFVA and ATLN…GLAL.

It localises to the cellular thylakoid membrane. The sequence is that of Thylakoid membrane protein slr0575 from Synechocystis sp. (strain ATCC 27184 / PCC 6803 / Kazusa).